The sequence spans 83 residues: Weak toxin DE-1 (83 aa).

Positions 1 to 21 (MKTLLLTLVVVTIVCLDLGYS) are cleaved as a signal peptide. 4 disulfides stabilise this stretch: Cys24/Cys45, Cys38/Cys62, Cys64/Cys75, and Cys76/Cys81.

Belongs to the three-finger toxin family. Short-chain subfamily. Type I alpha-neurotoxin sub-subfamily. In terms of tissue distribution, expressed by the venom gland.

It localises to the secreted. The protein is Weak toxin DE-1 of Ophiophagus hannah (King cobra).